The chain runs to 312 residues: tRNA dimethylallyltransferase (312 aa).

Residue 15 to 22 coordinates ATP; the sequence is GPTAAGKS. 17 to 22 serves as a coordination point for substrate; the sequence is TAAGKS. The segment at 40–43 is interaction with substrate tRNA; that stretch reads DSMQ.

It belongs to the IPP transferase family. In terms of assembly, monomer. Mg(2+) is required as a cofactor.

The enzyme catalyses adenosine(37) in tRNA + dimethylallyl diphosphate = N(6)-dimethylallyladenosine(37) in tRNA + diphosphate. Functionally, catalyzes the transfer of a dimethylallyl group onto the adenine at position 37 in tRNAs that read codons beginning with uridine, leading to the formation of N6-(dimethylallyl)adenosine (i(6)A). This is tRNA dimethylallyltransferase from Streptomyces griseus subsp. griseus (strain JCM 4626 / CBS 651.72 / NBRC 13350 / KCC S-0626 / ISP 5235).